A 504-amino-acid polypeptide reads, in one-letter code: Probable phenylalanine--tRNA ligase beta subunit (504 aa).

In terms of domain architecture, B5 spans 270–346 (IKDKSYLLSI…ICYGFNNINM (77 aa)). Aspartate 324, aspartate 330, glutamate 333, and aspartate 334 together coordinate Mg(2+).

It belongs to the phenylalanyl-tRNA synthetase beta subunit family. Type 2 subfamily. In terms of assembly, tetramer of two alpha and two beta subunits. The cofactor is Mg(2+).

It is found in the cytoplasm. It carries out the reaction tRNA(Phe) + L-phenylalanine + ATP = L-phenylalanyl-tRNA(Phe) + AMP + diphosphate + H(+). This is Probable phenylalanine--tRNA ligase beta subunit from Vairimorpha ceranae (strain BRL01) (Microsporidian parasite).